The sequence spans 1228 residues: Calcium-transporting ATPase (1228 aa).

Topologically, residues 1 to 63 are cytoplasmic; the sequence is MEEVIKNAHT…FELILNQFDD (63 aa). The chain crosses the membrane as a helical span at residues 64–81; the sequence is LLVKILLLAAFISFVLTL. Residues 82 to 92 lie on the Extracellular side of the membrane; the sequence is LDMKHKKIEIC. Residues 93-112 traverse the membrane as a helical segment; the sequence is DFIEPLVIVLILILNAAVGV. Residues 113 to 270 are Cytoplasmic-facing; the sequence is WQECNAEKSL…IDLFGQQLSK (158 aa). A helical transmembrane segment spans residues 271–291; the sequence is IIFVICVTVWIINFKHFSDPI. Topologically, residues 292-300 are extracellular; sequence HGSFLYGCL. The helical transmembrane segment at 301–321 threads the bilayer; it reads YYFKISVALAVAAIPEGLPAV. The Cytoplasmic segment spans residues 322 to 974; that stretch reads ITTCLALGTR…IYNNMKAFIR (653 aa). Catalysis depends on aspartate 358, which acts as the 4-aspartylphosphate intermediate. 2 disordered regions span residues 452 to 478 and 562 to 613; these read MKND…IPLK and MPAE…LKNA. Residues 589 to 604 are compositionally biased toward polar residues; sequence FFSSKNDNSHITSTLN. Lysine 716 provides a ligand contact to ATP. Residues 975–994 traverse the membrane as a helical segment; the sequence is YLISSNIGEVASIFITALLG. Topologically, residues 995 to 1000 are extracellular; that stretch reads IPDSLA. The chain crosses the membrane as a helical span at residues 1001–1021; the sequence is PVQLLWVNLVTDGLPATALGF. The Cytoplasmic segment spans residues 1022–1042; that stretch reads NPPEHDVMKCKPRHKNDNLIN. A helical membrane pass occupies residues 1043 to 1067; the sequence is GLTLLRYIIIGTYVGIATVSIFVYW. Over 1068-1118 the chain is Extracellular; sequence FLFYPDSDMHTLINFYQLSHYNQCKAWNNFRVNKVYDMSEDHCSYFSAGKI. The chain crosses the membrane as a helical span at residues 1119–1140; the sequence is KASTLSLSVLVLIEMFNALNAL. Residues 1141 to 1151 are Cytoplasmic-facing; that stretch reads SEYNSLFEIPP. A helical transmembrane segment spans residues 1152 to 1172; that stretch reads WRNMYLVLATIGSLLLHVLIL. Over 1173 to 1185 the chain is Extracellular; sequence YIPPLARIFGVVP. Residues 1186 to 1206 traverse the membrane as a helical segment; that stretch reads LSAYDWFLVFLWSFPVIILDE. The Cytoplasmic portion of the chain corresponds to 1207–1228; sequence IIKFYAKRKLKEEQRTKKIKID.

The protein belongs to the cation transport ATPase (P-type) (TC 3.A.3) family.

The protein resides in the membrane. The enzyme catalyses Ca(2+)(in) + ATP + H2O = Ca(2+)(out) + ADP + phosphate + H(+). Functionally, this magnesium-dependent enzyme catalyzes the hydrolysis of ATP coupled with the transport of the calcium. This Plasmodium falciparum (isolate K1 / Thailand) protein is Calcium-transporting ATPase (ATP6).